A 192-amino-acid polypeptide reads, in one-letter code: Ion-translocating oxidoreductase complex subunit B (192 aa).

The tract at residues 1–26 (MNAIWIAVAAVSLLGLAFGAILGYAS) is hydrophobic. In terms of domain architecture, 4Fe-4S spans 32–91 (EDDPVVEKIDEILPQSQCGQCGYPGCRPYAEAISCNGEKINRCAPGGEAVMLKIAELLNV). Positions 49, 52, 57, 74, 117, 120, 123, 127, 147, 150, 153, and 157 each coordinate [4Fe-4S] cluster. 4Fe-4S ferredoxin-type domains are found at residues 108 to 137 (MVAVIDENNCIGCTKCIQACPVDAIVGATR) and 138 to 167 (VMHTVMSDLCTGCNLCVDPCPTHCISLQPV).

Belongs to the 4Fe4S bacterial-type ferredoxin family. RnfB subfamily. In terms of assembly, the complex is composed of six subunits: RsxA, RsxB, RsxC, RsxD, RsxE and RsxG. It depends on [4Fe-4S] cluster as a cofactor.

It is found in the cell inner membrane. Its function is as follows. Part of a membrane-bound complex that couples electron transfer with translocation of ions across the membrane. Required to maintain the reduced state of SoxR. This Shigella boydii serotype 4 (strain Sb227) protein is Ion-translocating oxidoreductase complex subunit B.